The following is a 634-amino-acid chain: GTP-binding protein 4 (634 aa).

Residue alanine 2 is modified to N-acetylalanine. Lysine 103 bears the N6-acetyllysine; alternate mark. A Glycyl lysine isopeptide (Lys-Gly) (interchain with G-Cter in SUMO2); alternate cross-link involves residue lysine 103. The residue at position 122 (serine 122) is a Phosphoserine. The region spanning 169-340 (RTLLLCGYPN…VKTEACDRLL (172 aa)) is the OBG-type G domain. GTP is bound by residues 175–182 (GYPNVGKS), 221–225 (DTPGI), and 289–292 (NKCD). Lysine 332 participates in a covalent cross-link: Glycyl lysine isopeptide (Lys-Gly) (interchain with G-Cter in SUMO2). A phosphoserine mark is found at serine 468, serine 470, and serine 472. Positions 495 to 517 (ILESKEKNTQGPRMPRTAKKVQR) are disordered. N6-acetyllysine is present on lysine 522. The interval 529–634 (VDMDDKDDAH…KRKAGKKDRR (106 aa)) is disordered. Lysine 534 is covalently cross-linked (Glycyl lysine isopeptide (Lys-Gly) (interchain with G-Cter in SUMO2)). A compositionally biased stretch (basic residues) spans 544–554 (RRSRSITRKRK). At serine 558 the chain carries Phosphoserine. The span at 560–572 (PPSSVARSGSCSR) shows a compositional bias: polar residues. A compositionally biased stretch (basic and acidic residues) spans 573 to 585 (TPRDVSGLRDVKM). A compositionally biased stretch (basic residues) spans 586 to 604 (VKKAKTMMKNAQKKMNRLG). Positions 605-618 (KKGEADRHVFDMKP) are enriched in basic and acidic residues. Over residues 619–634 (KHLLSGKRKAGKKDRR) the composition is skewed to basic residues.

It belongs to the TRAFAC class OBG-HflX-like GTPase superfamily. OBG GTPase family. NOG subfamily. In terms of assembly, associates with pre-60S ribosomal particles. Interacts with MINAS-60 (product of an alternative open reading frame of RBM10).

Its subcellular location is the nucleus. It is found in the nucleolus. Functionally, involved in the biogenesis of the 60S ribosomal subunit. Acts as a TP53 repressor, preventing TP53 stabilization and cell cycle arrest. The chain is GTP-binding protein 4 from Homo sapiens (Human).